A 129-amino-acid chain; its full sequence is Ig lambda-1 chain V region S43 (129 aa).

Positions 1–19 (MAWISLILSLLALSSGAIS) are cleaved as a signal peptide. Residue Gln-20 is modified to Pyrrolidone carboxylic acid. Positions 20-125 (QAVVTQESAL…HWVFGGGTKL (106 aa)) constitute an Ig-like domain.

The sequence is that of Ig lambda-1 chain V region S43 from Mus musculus (Mouse).